The following is a 57-amino-acid chain: uncharacterized protein (57 aa).

This is an uncharacterized protein from Haemophilus influenzae (strain ATCC 51907 / DSM 11121 / KW20 / Rd).